A 570-amino-acid polypeptide reads, in one-letter code: Frizzled-2 (570 aa).

An N-terminal signal peptide occupies residues 1-28; the sequence is MRARSALPRSALPRLLLPLLLLPAAGPA. The Extracellular portion of the chain corresponds to 29–252; the sequence is QFHGEKGISI…HHHTRFARLW (224 aa). The 120-residue stretch at 39-158 folds into the FZ domain; it reads PDHGFCQPIS…HGAEQICVGQ (120 aa). Intrachain disulfides connect cysteine 44-cysteine 105, cysteine 52-cysteine 98, cysteine 89-cysteine 126, cysteine 115-cysteine 155, and cysteine 119-cysteine 143. Asparagine 58 is a glycosylation site (N-linked (GlcNAc...) asparagine). Asparagine 159 is a glycosylation site (N-linked (GlcNAc...) asparagine). The disordered stretch occupies residues 166 to 194; that stretch reads PALLTTAPPSGLQPGAGGTPGGPGGGGAP. Positions 179 to 193 are enriched in gly residues; sequence PGAGGTPGGPGGGGA. A helical transmembrane segment spans residues 253-273; that stretch reads ILTWSVLCCASTFFTVTTSLV. Over 274–284 the chain is Cytoplasmic; sequence AMQRFRYPERP. A helical transmembrane segment spans residues 285–305; the sequence is IIFLSGCYTMVSVAYIAGFVL. At 306 to 332 the chain is on the extracellular side; it reads QERVVCNERFSEDGYRTVGQGTKKEGC. Residues 333–353 form a helical membrane-spanning segment; that stretch reads TILFMMLYFFSMASSIWWVIL. At 354–375 the chain is on the cytoplasmic side; it reads SLTWFLAAGMKWGHAAIEANSQ. The helical transmembrane segment at 376–396 threads the bilayer; that stretch reads YFHLAAWAVPAVKTITILAMG. Residues 397-419 are Extracellular-facing; sequence QIDGDLLSGVCFVGLNRLDPLRG. A helical membrane pass occupies residues 420 to 440; that stretch reads FVLAPLFVYLFIGTSFLLAGF. Residues 441 to 466 are Cytoplasmic-facing; sequence VSLFRIRTIMKHDGTKTEPLERLMVR. A helical transmembrane segment spans residues 467–487; that stretch reads IGVFSVLYTVPATIVIACYFY. At 488–524 the chain is on the extracellular side; it reads EQAFREHWERSWVSQHCKSLAIPCPAHYTPRTSPDFT. A helical transmembrane segment spans residues 525 to 545; sequence VYMIKYLMTLIVGITSGFWIW. Residues 546 to 570 are Cytoplasmic-facing; that stretch reads SGKTLHSWRKFYTRLTNSRHGETTV. A Lys-Thr-X-X-X-Trp motif, mediates interaction with the PDZ domain of Dvl family members motif is present at residues 548-553; sequence KTLHSW. The short motif at 568-570 is the PDZ-binding element; sequence TTV.

Belongs to the G-protein coupled receptor Fz/Smo family. In terms of processing, ubiquitinated by ZNRF3, leading to its degradation by the proteasome. As to expression, widely expressed. Most abundant in kidney, liver, uterus, ovary and heart. Lower levels seen in brain and intestine. Extremely low in calvaria, mammary glands and testis.

The protein resides in the membrane. It localises to the cell membrane. Its function is as follows. Receptor for Wnt proteins. Most of frizzled receptors are coupled to the beta-catenin canonical signaling pathway, which leads to the activation of disheveled proteins, inhibition of GSK-3 kinase, nuclear accumulation of beta-catenin and activation of Wnt target genes. A second signaling pathway involving PKC and calcium fluxes has been seen for some family members, but it is not yet clear if it represents a distinct pathway or if it can be integrated in the canonical pathway, as PKC seems to be required for Wnt-mediated inactivation of GSK-3 kinase. Both pathways seem to involve interactions with G-proteins. May be involved in transduction and intercellular transmission of polarity information during tissue morphogenesis and/or in differentiated tissues. Activation by Wnt5A stimulates PKC activity via a G-protein-dependent mechanism. This chain is Frizzled-2 (Fzd2), found in Rattus norvegicus (Rat).